The primary structure comprises 359 residues: Aminomethyltransferase (359 aa).

It belongs to the GcvT family. As to quaternary structure, the glycine cleavage system is composed of four proteins: P, T, L and H.

The enzyme catalyses N(6)-[(R)-S(8)-aminomethyldihydrolipoyl]-L-lysyl-[protein] + (6S)-5,6,7,8-tetrahydrofolate = N(6)-[(R)-dihydrolipoyl]-L-lysyl-[protein] + (6R)-5,10-methylene-5,6,7,8-tetrahydrofolate + NH4(+). Functionally, the glycine cleavage system catalyzes the degradation of glycine. The protein is Aminomethyltransferase of Idiomarina loihiensis (strain ATCC BAA-735 / DSM 15497 / L2-TR).